An 82-amino-acid polypeptide reads, in one-letter code: ATP synthase subunit c, chloroplastic (82 aa).

The next 2 helical transmembrane spans lie at 3–23 and 57–77; these read PLIA…AAIG and FAFM…LLFA.

The protein belongs to the ATPase C chain family. F-type ATPases have 2 components, F(1) - the catalytic core - and F(0) - the membrane proton channel. F(1) has five subunits: alpha(3), beta(3), gamma(1), delta(1), epsilon(1). F(0) has four main subunits: a(1), b(1), b'(1) and c(10-14). The alpha and beta chains form an alternating ring which encloses part of the gamma chain. F(1) is attached to F(0) by a central stalk formed by the gamma and epsilon chains, while a peripheral stalk is formed by the delta, b and b' chains.

Its subcellular location is the plastid. The protein localises to the chloroplast thylakoid membrane. Functionally, f(1)F(0) ATP synthase produces ATP from ADP in the presence of a proton or sodium gradient. F-type ATPases consist of two structural domains, F(1) containing the extramembraneous catalytic core and F(0) containing the membrane proton channel, linked together by a central stalk and a peripheral stalk. During catalysis, ATP synthesis in the catalytic domain of F(1) is coupled via a rotary mechanism of the central stalk subunits to proton translocation. Its function is as follows. Key component of the F(0) channel; it plays a direct role in translocation across the membrane. A homomeric c-ring of between 10-14 subunits forms the central stalk rotor element with the F(1) delta and epsilon subunits. The protein is ATP synthase subunit c, chloroplastic of Oltmannsiellopsis viridis (Marine flagellate).